The primary structure comprises 197 residues: Imidazoleglycerol-phosphate dehydratase (197 aa).

Belongs to the imidazoleglycerol-phosphate dehydratase family.

It is found in the cytoplasm. It carries out the reaction D-erythro-1-(imidazol-4-yl)glycerol 3-phosphate = 3-(imidazol-4-yl)-2-oxopropyl phosphate + H2O. The protein operates within amino-acid biosynthesis; L-histidine biosynthesis; L-histidine from 5-phospho-alpha-D-ribose 1-diphosphate: step 6/9. This Thioalkalivibrio sulfidiphilus (strain HL-EbGR7) protein is Imidazoleglycerol-phosphate dehydratase.